A 494-amino-acid polypeptide reads, in one-letter code: Tripartite motif-containing protein 5 (494 aa).

A2 carries the N-acetylalanine modification. Residues 15 to 59 form an RING-type zinc finger; the sequence is CPICLELLTQPLSLDCGHSFCQACLTANHKTSMPDEGERSCPVCR. At S86 the chain carries Phosphoserine. A B box-type zinc finger spans residues 91–133; that stretch reads QKVDHCARHGEKLLLFCREDRKVICWLCERSQEHRGHHTFLTE. Residues C96, H99, C118, and H124 each coordinate Zn(2+). Residues 132–241 are a coiled coil; the sequence is TEEVAQEYQM…LISDLEHRLQ (110 aa). The interval 186–199 is required for interaction with GABARAP and for autophagy; that stretch reads FEQLRHILDWVESN. A B30.2/SPRY domain is found at 282-494; it reads LKVMLEVLRE…VPMTLCSPSS (213 aa).

This sequence belongs to the TRIM/RBCC family. Can form homodimers and homotrimers. In addition to lower-order dimerization, also exhibits a higher-order multimerization and both low- and high-order multimerizations are essential for its restriction activity. Interacts with BTBD1 and BTBD2. Interacts with PSMC4, PSMC5, PSMD7 and HSPA8/HSC70. Interacts (via B30.2/SPRY domain) with HSPA1A/B. Interacts with PSMC2, MAP3K7/TAK1, TAB2 and TAB3. Interacts with SQSTM1. Interacts with TRIM6 and TRIM34. Interacts with ULK1 (phosphorylated form), GABARAP, GABARAPL1, GABARAPL2, MAP1LC3A, MAP1LC3C and BECN1. Post-translationally, degraded in a proteasome-independent fashion in the absence of viral infection but in a proteasome-dependent fashion following exposure to restriction sensitive virus. In terms of processing, autoubiquitinated in a RING finger- and UBE2D2-dependent manner. Monoubiquitinated by TRIM21. Deubiquitinated by Yersinia YopJ. Ubiquitination may not lead to proteasomal degradation.

The protein localises to the cytoplasm. The protein resides in the nucleus. The enzyme catalyses S-ubiquitinyl-[E2 ubiquitin-conjugating enzyme]-L-cysteine + [acceptor protein]-L-lysine = [E2 ubiquitin-conjugating enzyme]-L-cysteine + N(6)-ubiquitinyl-[acceptor protein]-L-lysine.. The protein operates within protein modification; protein ubiquitination. In terms of biological role, capsid-specific restriction factor that prevents infection from non-host-adapted retroviruses. Blocks viral replication early in the life cycle, after viral entry but before reverse transcription. In addition to acting as a capsid-specific restriction factor, also acts as a pattern recognition receptor that activates innate immune signaling in response to the retroviral capsid lattice. Binding to the viral capsid triggers its E3 ubiquitin ligase activity, and in concert with the heterodimeric ubiquitin conjugating enzyme complex UBE2V1-UBE2N (also known as UBC13-UEV1A complex) generates 'Lys-63'-linked polyubiquitin chains, which in turn are catalysts in the autophosphorylation of the MAP3K7/TAK1 complex (includes TAK1, TAB2, and TAB3). Activation of the MAP3K7/TAK1 complex by autophosphorylation results in the induction and expression of NF-kappa-B and MAPK-responsive inflammatory genes, thereby leading to an innate immune response in the infected cell. Plays a role in regulating autophagy through activation of autophagy regulator BECN1 by causing its dissociation from its inhibitors BCL2 and TAB2. In Hoolock hoolock (Western hoolock gibbon), this protein is Tripartite motif-containing protein 5 (TRIM5).